Reading from the N-terminus, the 99-residue chain is Large ribosomal subunit protein bL21 (99 aa).

This sequence belongs to the bacterial ribosomal protein bL21 family. In terms of assembly, part of the 50S ribosomal subunit. Contacts protein L20.

Functionally, this protein binds to 23S rRNA in the presence of protein L20. The chain is Large ribosomal subunit protein bL21 from Mycoplasma mobile (strain ATCC 43663 / 163K / NCTC 11711) (Mesomycoplasma mobile).